A 417-amino-acid polypeptide reads, in one-letter code: NADH-quinone oxidoreductase subunit D (417 aa).

Belongs to the complex I 49 kDa subunit family. In terms of assembly, NDH-1 is composed of 14 different subunits. Subunits NuoB, C, D, E, F, and G constitute the peripheral sector of the complex.

It is found in the cell inner membrane. The catalysed reaction is a quinone + NADH + 5 H(+)(in) = a quinol + NAD(+) + 4 H(+)(out). Its function is as follows. NDH-1 shuttles electrons from NADH, via FMN and iron-sulfur (Fe-S) centers, to quinones in the respiratory chain. The immediate electron acceptor for the enzyme in this species is believed to be ubiquinone. Couples the redox reaction to proton translocation (for every two electrons transferred, four hydrogen ions are translocated across the cytoplasmic membrane), and thus conserves the redox energy in a proton gradient. The chain is NADH-quinone oxidoreductase subunit D from Francisella philomiragia subsp. philomiragia (strain ATCC 25017 / CCUG 19701 / FSC 153 / O#319-036).